The primary structure comprises 92 residues: Large ribosomal subunit protein bL25 (92 aa).

This sequence belongs to the bacterial ribosomal protein bL25 family. In terms of assembly, part of the 50S ribosomal subunit; part of the 5S rRNA/L5/L18/L25 subcomplex. Contacts the 5S rRNA. Binds to the 5S rRNA independently of L5 and L18.

Its function is as follows. This is one of the proteins that binds to the 5S RNA in the ribosome where it forms part of the central protuberance. The chain is Large ribosomal subunit protein bL25 from Aliivibrio fischeri (strain ATCC 700601 / ES114) (Vibrio fischeri).